The sequence spans 312 residues: Acetyl-coenzyme A carboxylase carboxyl transferase subunit alpha (312 aa).

Residues 36 to 286 enclose the CoA carboxyltransferase C-terminal domain; that stretch reads RLDKEVKSIY…KEYFLDALRT (251 aa).

The protein belongs to the AccA family. In terms of assembly, acetyl-CoA carboxylase is a heterohexamer composed of biotin carboxyl carrier protein (AccB), biotin carboxylase (AccC) and two subunits each of ACCase subunit alpha (AccA) and ACCase subunit beta (AccD).

Its subcellular location is the cytoplasm. It catalyses the reaction N(6)-carboxybiotinyl-L-lysyl-[protein] + acetyl-CoA = N(6)-biotinyl-L-lysyl-[protein] + malonyl-CoA. The protein operates within lipid metabolism; malonyl-CoA biosynthesis; malonyl-CoA from acetyl-CoA: step 1/1. Component of the acetyl coenzyme A carboxylase (ACC) complex. First, biotin carboxylase catalyzes the carboxylation of biotin on its carrier protein (BCCP) and then the CO(2) group is transferred by the carboxyltransferase to acetyl-CoA to form malonyl-CoA. The polypeptide is Acetyl-coenzyme A carboxylase carboxyl transferase subunit alpha (Helicobacter pylori (strain G27)).